Here is a 671-residue protein sequence, read N- to C-terminus: UvrABC system protein B (671 aa).

The Helicase ATP-binding domain occupies 25 to 412 (EGIDAGLAHQ…AGRIVEQVVR (388 aa)). ATP is bound at residue 38–45 (GVTGSGKT). The short motif at 91 to 114 (YYDYYQPEAYVPSSDTFIEKDASI) is the Beta-hairpin element. Positions 429 to 582 (QVDDLLSEIH…QIAFNLEHGI (154 aa)) constitute a Helicase C-terminal domain. A disordered region spans residues 601-625 (PGSRSKKRKGMAKAAEESARYENEL). A compositionally biased stretch (basic and acidic residues) spans 614-625 (AAEESARYENEL). A UVR domain is found at 632–667 (NKRIRQLEEKMYQLARDLEFEAAAQMRDEIGKLRER).

This sequence belongs to the UvrB family. In terms of assembly, forms a heterotetramer with UvrA during the search for lesions. Interacts with UvrC in an incision complex.

It is found in the cytoplasm. Its function is as follows. The UvrABC repair system catalyzes the recognition and processing of DNA lesions. A damage recognition complex composed of 2 UvrA and 2 UvrB subunits scans DNA for abnormalities. Upon binding of the UvrA(2)B(2) complex to a putative damaged site, the DNA wraps around one UvrB monomer. DNA wrap is dependent on ATP binding by UvrB and probably causes local melting of the DNA helix, facilitating insertion of UvrB beta-hairpin between the DNA strands. Then UvrB probes one DNA strand for the presence of a lesion. If a lesion is found the UvrA subunits dissociate and the UvrB-DNA preincision complex is formed. This complex is subsequently bound by UvrC and the second UvrB is released. If no lesion is found, the DNA wraps around the other UvrB subunit that will check the other stand for damage. This Pseudomonas syringae pv. tomato (strain ATCC BAA-871 / DC3000) protein is UvrABC system protein B.